The primary structure comprises 104 residues: Gallinacin-11 (104 aa).

The N-terminal stretch at 1–22 (MKLFSCLMALLLFLLQAVPGLG) is a signal peptide. 3 cysteine pairs are disulfide-bonded: Cys30-Cys60, Cys37-Cys53, and Cys43-Cys61.

The protein belongs to the beta-defensin family. In terms of tissue distribution, detected in outer membrane of the vitelline layer of the egg (at protein level). Expressed in the liver, gall bladder, kidney, testis, ovary and male and female reproductive tracts. Expressed in the ovarian stroma, but not in the ovarian follicles. No expression is detected in bone marrow.

It is found in the secreted. It localises to the cytoplasmic granule. Its function is as follows. Has bactericidal activity. This chain is Gallinacin-11 (GAL11), found in Gallus gallus (Chicken).